The primary structure comprises 1101 residues: MDRAPTEQNVKLSAEVEPFIPQKKSPDTFMIPMALPNDNGSVSGVEPTPIPSYLITCYPFVQENQSNRQFPLYNNDIRWQQPNPNPTGPYFAYPIISAQPPVSTEYTYYQLMPAPCAQVMGFYHPFPTPYSNTFQAANTVNAITTECTERPSQLGQVFPLSSHRSRNSNRGSVVPKQQLLQQHIKSKRPLVKNVATQKETNAAGPDSRSKIVLLVDASQQTDFPSDIANKSLSETTATMLWKSKGRRRRASHPTAESSSEQGASEADIDSDSGYCSPKHSNNQPAAGALRNPDSGTMNHVESSMCAGGVNWSNVTCQATQKKPWMEKNQTFSRGGRQTEQRNNSQVGFRCRGHSTSSERRQNLQKRPDNKHLSSSQSHRSDPNSESLYFEDEDGFQELNENGNAKDENIQQKLSSKVLDDLPENSPINIVQTPIPITTSVPKRAKSQKKKALAAALATAQEYSEISMEQKKLQEALSKAAGKKNKTPVQLDLGDMLAALEKQQQAMKARQITNTRPLSYTVVTAASFHTKDSTNRKPLTKSQPCLTSFNSVDIASSKAKKGKEKEIAKLKRPTALKKVILKEREEKKGRLTVDHNLLGSEEPTEMHLDFIDDLPQEIVSQEDTGLSMPSDTSLSPASQNSPYCMTPVSQGSPASSGIGSPMASSTITKIHSKRFREYCNQVLCKEIDECVTLLLQELVSFQERIYQKDPVRAKARRRLVMGLREVTKHMKLNKIKCVIISPNCEKIQSKGGLDEALYNVIAMAREQEIPFVFALGRKALGRCVNKLVPVSVVGIFNYFGAESLFNKLVELTEEARKAYKDMVAAMEQEQAEEALKNVKKVPHHMGHSRNPSAASAISFCSVISEPISEVNEKEYETNWRNMVETSDGLEASENEKEVSCKHSTSEKPSKLPFDTPPIGKQPSLVATGSTTSATSAGKSTASDKEEVKPDDLEWASQQSTETGSLDGSCRDLLNSSITSTTSTLVPGMLEEEEDEDEEEEEDYTHEPISVEVQLNSRIESWVSETQRTMETLQLGKTLNGSEEDNVEQSGEEEAEAPEVLEPGMDSEAWTADQQASPGQQKSSNCSSLNKEHSDSNYTTQTT.

Disordered stretches follow at residues 154 to 206, 240 to 295, 320 to 387, 884 to 1010, and 1030 to 1101; these read LGQV…AGPD, LWKS…PDSG, QKKP…SESL, TSDG…ISVE, and TLQL…TQTT. The segment covering 255–265 has biased composition (low complexity); it reads AESSSEQGASE. Serine 276 carries the phosphoserine modification. A compositionally biased stretch (polar residues) spans 327–346; it reads KNQTFSRGGRQTEQRNNSQV. Basic and acidic residues-rich tracts occupy residues 356-371 and 892-908; these read SSER…DNKH and ENEK…EKPS. Low complexity predominate over residues 925–939; the sequence is ATGSTTSATSAGKST. Residues 940–950 are compositionally biased toward basic and acidic residues; that stretch reads ASDKEEVKPDD. Polar residues predominate over residues 954-964; that stretch reads ASQQSTETGSL. Positions 988 to 1002 are enriched in acidic residues; sequence LEEEEDEDEEEEEDY. The span at 1030-1039 shows a compositional bias: polar residues; sequence TLQLGKTLNG. Acidic residues predominate over residues 1040-1057; it reads SEEDNVEQSGEEEAEAPE. Positions 1070–1087 are enriched in polar residues; it reads ADQQASPGQQKSSNCSSL.

Binds SECIS (Sec insertion sequence) elements present on selenocysteine (Sec) protein mRNAs, but does not promote Sec incorporation into selenoproteins in vitro. The chain is Selenocysteine insertion sequence-binding protein 2-like (SECISBP2L) from Homo sapiens (Human).